We begin with the raw amino-acid sequence, 1607 residues long: Abnormal cell migration protein 38 (1607 aa).

Disordered regions lie at residues 14–52 (EFNK…SQDF), 67–93 (RLSP…QYHV), 167–222 (STSY…AAQA), 326–425 (GSSA…PPSQ), 459–478 (SPNT…GMDQ), 549–594 (MVHR…QHSY), 845–931 (YDEN…PETE), 1017–1061 (SVQV…DYDM), 1141–1241 (EPSP…VTPK), 1319–1378 (ETPN…KGQL), 1392–1445 (FANV…PQAV), and 1517–1607 (KVKT…STDP). 2 stretches are compositionally biased toward polar residues: residues 81–93 (PGPS…QYHV) and 179–191 (PSGN…NHQQ). The segment covering 195-205 (VPQVQQQPAKP) has biased composition (low complexity). Positions 206-218 (KTTKKRPPPKKKT) are enriched in basic residues. The span at 327-341 (SSASSSAQPSQPAKK) shows a compositional bias: low complexity. Composition is skewed to polar residues over residues 349–371 (VPNT…QITP) and 379–425 (PTTT…PPSQ). Residues 585–594 (NSHSQSQHSY) show a composition bias toward low complexity. A compositionally biased stretch (acidic residues) spans 858 to 871 (EEPESESESEPEAE). 2 stretches are compositionally biased toward basic and acidic residues: residues 872-886 (PEPK…EPAR) and 907-917 (YRNESESTFDW). Composition is skewed to low complexity over residues 1333–1354 (PNIP…SVSV), 1395–1419 (VPSS…VSAK), and 1584–1601 (LLGT…SSGL).

In terms of tissue distribution, expressed in gonad distal tip cells and gonad sheath cells.

Its subcellular location is the nucleus. It localises to the cytoplasm. Functionally, during gonad development, involved in distal tip cell (DTC) migration from the dorsal side of the hermaphrodite body to the midbody which allows for the formation of gonad arms. Role in gonad DTC migration may be in association with integrin related proteins ina-1 and mig-15. This Caenorhabditis elegans protein is Abnormal cell migration protein 38.